A 171-amino-acid chain; its full sequence is ATP synthase subunit b (171 aa).

A helical membrane pass occupies residues 2-22 (FLVKMVLGFLIFLSPLCATGL).

It belongs to the ATPase B chain family. F-type ATPases have 2 components, F(1) - the catalytic core - and F(0) - the membrane proton channel. F(1) has five subunits: alpha(3), beta(3), gamma(1), delta(1), epsilon(1). F(0) has three main subunits: a(1), b(2) and c(10-14). The alpha and beta chains form an alternating ring which encloses part of the gamma chain. F(1) is attached to F(0) by a central stalk formed by the gamma and epsilon chains, while a peripheral stalk is formed by the delta and b chains.

The protein localises to the cell inner membrane. F(1)F(0) ATP synthase produces ATP from ADP in the presence of a proton or sodium gradient. F-type ATPases consist of two structural domains, F(1) containing the extramembraneous catalytic core and F(0) containing the membrane proton channel, linked together by a central stalk and a peripheral stalk. During catalysis, ATP synthesis in the catalytic domain of F(1) is coupled via a rotary mechanism of the central stalk subunits to proton translocation. In terms of biological role, component of the F(0) channel, it forms part of the peripheral stalk, linking F(1) to F(0). The chain is ATP synthase subunit b from Helicobacter pylori (strain Shi470).